The primary structure comprises 198 residues: Recombination protein RecR (198 aa).

The C4-type zinc finger occupies 56–71 (CTECRDFSETKICAIC). In terms of domain architecture, Toprim spans 79-174 (HQLCVVESPP…RPSRLAQGLP (96 aa)).

It belongs to the RecR family.

May play a role in DNA repair. It seems to be involved in an RecBC-independent recombinational process of DNA repair. It may act with RecF and RecO. This Xylella fastidiosa (strain Temecula1 / ATCC 700964) protein is Recombination protein RecR.